Here is a 590-residue protein sequence, read N- to C-terminus: Pescadillo homolog (590 aa).

Positions 297–318 (AKADAGEEEEVEEEEEVEDDGL) are disordered. Acidic residues predominate over residues 302–318 (GEEEEVEEEEEVEDDGL). In terms of domain architecture, BRCT spans 337-446 (TAGQLFSNFT…KLLPVSEYAP (110 aa)). A disordered region spans residues 452 to 590 (AHLSPWGDAG…RKLNEKKEKR (139 aa)). Acidic residues predominate over residues 471–499 (DASDDDEDDEDIEVAPEDYDKDDEEEEAE). Residues 489-589 (YDKDDEEEEA…RRKLNEKKEK (101 aa)) are a coiled coil. Composition is skewed to basic and acidic residues over residues 500-517 (AEAKQHQRELEAEAKGTK), 532-547 (DKMTKAEKQEEEDKKL), and 567-577 (NDKKSDREAEL).

The protein belongs to the pescadillo family. As to quaternary structure, component of the NOP7 complex, composed of ERB1, NOP7 and YTM1. The complex is held together by ERB1, which interacts with NOP7 via its N-terminal domain and with YTM1 via a high-affinity interaction between the seven-bladed beta-propeller domains of the 2 proteins. The NOP7 complex associates with the 66S pre-ribosome.

The protein resides in the nucleus. It is found in the nucleolus. Its subcellular location is the nucleoplasm. In terms of biological role, component of the NOP7 complex, which is required for maturation of the 25S and 5.8S ribosomal RNAs and formation of the 60S ribosome. The sequence is that of Pescadillo homolog from Yarrowia lipolytica (strain CLIB 122 / E 150) (Yeast).